The sequence spans 293 residues: Histamine N-methyltransferase B (293 aa).

Residue Glu-28 coordinates substrate. 5 residues coordinate S-adenosyl-L-methionine: Gly-60, Glu-89, Gln-94, Ser-120, and Ile-142. Asn-283 lines the substrate pocket.

Belongs to the class I-like SAM-binding methyltransferase superfamily. HNMT family. In terms of assembly, monomer.

The protein localises to the cytoplasm. The catalysed reaction is histamine + S-adenosyl-L-methionine = N(tau)-methylhistamine + S-adenosyl-L-homocysteine + H(+). Its function is as follows. Inactivates histamine by N-methylation. Plays an important role in degrading histamine and in regulating the airway response to histamine. In Xenopus laevis (African clawed frog), this protein is Histamine N-methyltransferase B (hnmt-b).